Reading from the N-terminus, the 240-residue chain is Phosphoribosyl isomerase A (240 aa).

The Proton acceptor role is filled by Asp-11. Asp-130 acts as the Proton donor in catalysis.

Belongs to the HisA/HisF family. In terms of assembly, monomer.

Its subcellular location is the cytoplasm. It carries out the reaction 1-(5-phospho-beta-D-ribosyl)-5-[(5-phospho-beta-D-ribosylamino)methylideneamino]imidazole-4-carboxamide = 5-[(5-phospho-1-deoxy-D-ribulos-1-ylimino)methylamino]-1-(5-phospho-beta-D-ribosyl)imidazole-4-carboxamide. The enzyme catalyses N-(5-phospho-beta-D-ribosyl)anthranilate = 1-(2-carboxyphenylamino)-1-deoxy-D-ribulose 5-phosphate. It participates in amino-acid biosynthesis; L-histidine biosynthesis; L-histidine from 5-phospho-alpha-D-ribose 1-diphosphate: step 4/9. Its pathway is amino-acid biosynthesis; L-tryptophan biosynthesis; L-tryptophan from chorismate: step 3/5. Catalyzes the isomerization of the aminoaldose moiety of ProFAR to the aminoketose of PRFAR in the biosynthesis pathway for histidine and the isomerization of the aminoaldose PRA to the aminoketose CdRP in the biosynthsis pathway for tryptophan. The sequence is that of Phosphoribosyl isomerase A (priA) from Streptomyces coelicolor (strain ATCC BAA-471 / A3(2) / M145).